The chain runs to 417 residues: RH-like protein ID (417 aa).

Transmembrane regions (helical) follow at residues 12-32 (CLPL…YFFT), 44-64 (LVAS…GFGF), 77-97 (VAFN…LDGF), 125-145 (ISAG…MVLV), 172-192 (IYVF…KPLA), 203-223 (TIPS…WPSF), 238-258 (VFNT…VSSL), 265-285 (INMT…ATSC), 287-307 (LIPS…ISIG), 331-351 (NFSL…VLDT), and 358-378 (MVGF…VIAL).

Belongs to the ammonium transporter (TC 2.A.49) family. Rh subfamily.

It is found in the membrane. In terms of biological role, may be part of an oligomeric complex which is likely to have a transport or channel function in the erythrocyte membrane. This Gorilla gorilla gorilla (Western lowland gorilla) protein is RH-like protein ID.